Reading from the N-terminus, the 593-residue chain is Capsid protein 1 (593 aa).

This sequence belongs to the NCLDV major capsid protein family.

It is found in the virion. The sequence is that of Capsid protein 1 from Acanthamoeba polyphaga mimivirus (APMV).